A 283-amino-acid polypeptide reads, in one-letter code: Urease accessory protein UreD (283 aa).

The protein belongs to the UreD family. As to quaternary structure, ureD, UreF and UreG form a complex that acts as a GTP-hydrolysis-dependent molecular chaperone, activating the urease apoprotein by helping to assemble the nickel containing metallocenter of UreC. The UreE protein probably delivers the nickel.

The protein resides in the cytoplasm. Its function is as follows. Required for maturation of urease via the functional incorporation of the urease nickel metallocenter. In Rhodopseudomonas palustris (strain BisB5), this protein is Urease accessory protein UreD.